The chain runs to 473 residues: Biotin-dependent acetyl-/propionyl-coenzyme A carboxylase beta6 subunit (473 aa).

A CoA carboxyltransferase N-terminal domain is found at 1–224 (MTIMAPEAVG…QGHFDRSKAE (224 aa)). The region spanning 225-473 (AGDTDIHALL…RRGRHKNIPL (249 aa)) is the CoA carboxyltransferase C-terminal domain.

This sequence belongs to the AccD/PCCB family. The biotin-dependent acyl-CoA carboxylase complex is composed of AccA3, which contains the biotin carboxylase (BC) and biotin carboxyl carrier protein (BCCP) domains, and AccD6, which contains the carboxyl transferase (CT) domain.

The catalysed reaction is N(6)-carboxybiotinyl-L-lysyl-[protein] + acetyl-CoA = N(6)-biotinyl-L-lysyl-[protein] + malonyl-CoA. It carries out the reaction N(6)-carboxybiotinyl-L-lysyl-[protein] + propanoyl-CoA = methylmalonyl-CoA + N(6)-biotinyl-L-lysyl-[protein]. The protein operates within lipid metabolism; fatty acid biosynthesis. It participates in lipid metabolism; mycolic acid biosynthesis. Functionally, component of a biotin-dependent acyl-CoA carboxylase complex. This subunit transfers the CO2 from carboxybiotin to the CoA ester substrate. When associated with the alpha3 subunit AccA3, is involved in the carboxylation of acetyl-CoA and propionyl-CoA. This chain is Biotin-dependent acetyl-/propionyl-coenzyme A carboxylase beta6 subunit (accD6), found in Mycobacterium bovis (strain ATCC BAA-935 / AF2122/97).